Here is a 376-residue protein sequence, read N- to C-terminus: MADSRRVIIASWYRTFMGIVNLFGLETKTCWNVTRIEPLNEVQSCEGLRDPACFYVGVIFILNGLMMGLFFIYGTYLSGTELGGLITVLCFFFNHGEATCVMWTPPLRESFSYPFLVLQMYVLTLILRTSSNDRRPFIALCLSNVAFMLPWQFAQFILFTQIASLFPMYVVGYIEPSKFQKIIYMNMISVTLSFILMFGNSMYLSSYYSSSLLMTWAIILKRNEIQKLGVSKLNCWLIQGSAWWCGTIILKFLTSKILGVSDHICLSDLIAAGILRYTDFDTLKYTCSPEFDFMEKATLLIYTKTLLLPVVMVITCFIFKKTVGDISRVLATNVYLRCCLCRCHAYNGKCQAVYTSSHCESSTLRRCRLEAWLQHA.

Asn-32 carries an N-linked (GlcNAc...) asparagine glycan. Transmembrane regions (helical) follow at residues 52–72 (ACFYVGVIFILNGLMMGLFFI), 107–127 (LRESFSYPFLVLQMYVLTLIL), 154–174 (AQFILFTQIASLFPMYVVGYI), 182–202 (IIYMNMISVTLSFILMFGNSM), 233–253 (LNCWLIQGSAWWCGTIILKFL), and 299–319 (LLIYTKTLLLPVVMVITCFIF).

The protein belongs to the dpy-19 family. In terms of tissue distribution, fibroblast, lung, lymphoblast, spleen and testis.

The protein resides in the membrane. Its function is as follows. Probable C-mannosyltransferase that mediates C-mannosylation of tryptophan residues on target proteins. This Homo sapiens (Human) protein is Putative C-mannosyltransferase DPY19L2P2 (DPY19L2P2).